A 546-amino-acid polypeptide reads, in one-letter code: Protein phosphatase 1G (546 aa).

The N-myristoyl glycine moiety is linked to residue Gly2. Position 22 is an omega-N-methylarginine (Arg22). The 480-residue stretch at 26 to 505 folds into the PPM-type phosphatase domain; that stretch reads PYGFSAMQGW…DNMTCIIICF (480 aa). The Mn(2+) site is built by Asp60 and Gly61. Disordered regions lie at residues 116 to 139 and 161 to 328; these read QIAG…DVDN and GQNC…SDSG. Position 122 is a phosphothreonine (Thr122). The segment covering 123–139 has biased composition (acidic residues); sequence EDEDEKEKVADEDDVDN. Phosphoserine is present on Ser183. Over residues 259-312 the composition is skewed to acidic residues; it reads DSEDESDEAEEEEEDSEECSEEEDGYSSEEAENEEDEDDTEEAEEDDEEEEEEM. Position 383 is an N6-acetyllysine (Lys383). Mn(2+)-binding residues include Asp441 and Asp496. The interval 512 to 546 is disordered; that stretch reads ELQPESGKRKLEEVLSTEGAEENGNSDKKKKAKRD. Phosphoserine is present on Ser527.

It belongs to the PP2C family. As to quaternary structure, interacts with NOL3; may dephosphorylate NOL3. The cofactor is Mg(2+). Mn(2+) is required as a cofactor. As to expression, widely expressed. Most abundant in testis, skeletal muscle, and heart.

Its subcellular location is the cytoplasm. The protein resides in the membrane. The catalysed reaction is O-phospho-L-seryl-[protein] + H2O = L-seryl-[protein] + phosphate. The enzyme catalyses O-phospho-L-threonyl-[protein] + H2O = L-threonyl-[protein] + phosphate. This is Protein phosphatase 1G (PPM1G) from Homo sapiens (Human).